Here is a 660-residue protein sequence, read N- to C-terminus: Kinesin-like protein KIF2A (660 aa).

The disordered stretch occupies residues 1–140 (MVTSLNEDNE…QQELREKRAQ (140 aa)). Residues 1 to 171 (MVTSLNEDNE…LDYRPLTTAD (171 aa)) form a globular region. Serine 48 carries the post-translational modification Phosphoserine. 2 positions are modified to phosphothreonine: threonine 51 and threonine 70. Serine 73 carries the phosphoserine modification. Lysine 75 carries the post-translational modification N6-acetyllysine. The segment covering 96–106 (LPEQSSSAQQN) has biased composition (polar residues). Residues 113-140 (CVKEVEKLQEKREKRRLQQQELREKRAQ) are compositionally biased toward basic and acidic residues. A Kinesin motor domain is found at 177–507 (RICVCVRKRP…LRYANRVKEL (331 aa)). 267 to 274 (GQTGSGKT) lines the ATP pocket. Positions 614 to 653 (ATQLEAILEQKIDILTELRDKVKSFRAALQEEEQASKQIN) form a coiled coil.

Belongs to the TRAFAC class myosin-kinesin ATPase superfamily. Kinesin family. MCAK/KIF2 subfamily. In terms of assembly, interacts with AURKA and PLK1. Interacts with PSRC1. Interacts with MCRS1; the interaction enhances recruitment of KIF2A to the minus ends of spindle microtubules which promotes chromosome alignment.

Its subcellular location is the cytoplasm. The protein resides in the cytoskeleton. It localises to the microtubule organizing center. The protein localises to the centrosome. It is found in the spindle pole. Its subcellular location is the spindle. Plus end-directed microtubule-dependent motor required for normal brain development. May regulate microtubule dynamics during axonal growth. Required for normal progression through mitosis. Required for normal congress of chromosomes at the metaphase plate. Required for normal spindle dynamics during mitosis. Promotes spindle turnover. Implicated in formation of bipolar mitotic spindles. Has microtubule depolymerization activity. The protein is Kinesin-like protein KIF2A (KIF2A) of Bos taurus (Bovine).